A 179-amino-acid polypeptide reads, in one-letter code: Large ribosomal subunit protein uL5 (179 aa).

It belongs to the universal ribosomal protein uL5 family. Part of the 50S ribosomal subunit; part of the 5S rRNA/L5/L18/L25 subcomplex. Contacts the 5S rRNA and the P site tRNA. Forms a bridge to the 30S subunit in the 70S ribosome.

Functionally, this is one of the proteins that bind and probably mediate the attachment of the 5S RNA into the large ribosomal subunit, where it forms part of the central protuberance. In the 70S ribosome it contacts protein S13 of the 30S subunit (bridge B1b), connecting the 2 subunits; this bridge is implicated in subunit movement. Contacts the P site tRNA; the 5S rRNA and some of its associated proteins might help stabilize positioning of ribosome-bound tRNAs. The chain is Large ribosomal subunit protein uL5 from Solidesulfovibrio magneticus (strain ATCC 700980 / DSM 13731 / RS-1) (Desulfovibrio magneticus).